We begin with the raw amino-acid sequence, 200 residues long: Mediator of RNA polymerase II transcription subunit 22 (200 aa).

The stretch at 93–123 (SVNDAISLQNQQLRSLQEECDKKLISLRDEI) forms a coiled coil. Residues 159–200 (ASPSSSSSSTQGDQEEVEILPSQETEPQHHLNGQGTSSLEKM) are disordered. Residues 189–200 (LNGQGTSSLEKM) are compositionally biased toward polar residues.

Belongs to the Mediator complex subunit 22 family. In terms of assembly, component of the Mediator complex.

Its subcellular location is the nucleus. Its function is as follows. Component of the Mediator complex, a coactivator involved in the regulated transcription of nearly all RNA polymerase II-dependent genes. Mediator functions as a bridge to convey information from gene-specific regulatory proteins to the basal RNA polymerase II transcription machinery. Mediator is recruited to promoters by direct interactions with regulatory proteins and serves as a scaffold for the assembly of a functional preinitiation complex with RNA polymerase II and the general transcription factors. The chain is Mediator of RNA polymerase II transcription subunit 22 (med22) from Takifugu rubripes (Japanese pufferfish).